A 372-amino-acid chain; its full sequence is uncharacterized protein (372 aa).

4 to 18 is an FAD binding site; that stretch reads YIIVGAGILGASTAY.

Belongs to the DadA oxidoreductase family. The cofactor is FAD.

This is an uncharacterized protein from Bacillus subtilis (strain 168).